The following is a 30-amino-acid chain: GKITFYEDRNFQGRCYECSTDCPDLSPYFS.

Residues 1–30 (GKITFYEDRNFQGRCYECSTDCPDLSPYFS) enclose the Beta/gamma crystallin 'Greek key' domain.

Belongs to the beta/gamma-crystallin family. In terms of assembly, monomer.

Its function is as follows. Crystallins are the dominant structural components of the vertebrate eye lens. The sequence is that of Gamma-II crystallin from Rhizoprionodon acutus (Milk shark).